Consider the following 327-residue polypeptide: DNA polymerase III subunit delta' (327 aa).

As to quaternary structure, DNA polymerase III contains a core (composed of alpha, epsilon and theta chains) that associates with a tau subunit. This core dimerizes to form the POLIII' complex. PolIII' associates with the gamma complex (composed of gamma, delta, delta', psi and chi chains) and with the beta chain to form the complete DNA polymerase III complex.

It catalyses the reaction DNA(n) + a 2'-deoxyribonucleoside 5'-triphosphate = DNA(n+1) + diphosphate. Functionally, DNA polymerase III is a complex, multichain enzyme responsible for most of the replicative synthesis in bacteria. This DNA polymerase also exhibits 3' to 5' exonuclease activity. The protein is DNA polymerase III subunit delta' (holB) of Haemophilus influenzae (strain ATCC 51907 / DSM 11121 / KW20 / Rd).